The primary structure comprises 333 residues: Transcription initiation factor IIB (333 aa).

A TFIIB-type zinc finger spans residues 33–64 (EVYRCPICGNDKFIYNYERGEVVCIVCGAVVQ). Residues cysteine 37, cysteine 40, cysteine 56, and cysteine 59 each coordinate Zn(2+). 2 consecutive repeat copies span residues 149-232 (QELE…LREL) and 243-324 (LYIS…ELAK).

This sequence belongs to the TFIIB family.

Stabilizes TBP binding to an archaeal box-A promoter. Also responsible for recruiting RNA polymerase II to the pre-initiation complex (DNA-TBP-TFIIB). This chain is Transcription initiation factor IIB, found in Pyrobaculum neutrophilum (strain DSM 2338 / JCM 9278 / NBRC 100436 / V24Sta) (Thermoproteus neutrophilus).